A 494-amino-acid polypeptide reads, in one-letter code: Membrane-bound lytic murein transglycosylase F (494 aa).

The signal sequence occupies residues 1-20 (MIKYLYVILLGLLLSGCQPA). Residues 21-259 (EVVEIEASPK…HLNEKYFGHV (239 aa)) form a non-LT domain region. The tract at residues 260-494 (KRFDYVDTRA…LKPKLGAGQP (235 aa)) is LT domain. Residue E304 is part of the active site. The span at 473–485 (QSLASDSKTNNTL) shows a compositional bias: polar residues. The interval 473–494 (QSLASDSKTNNTLKPKLGAGQP) is disordered.

In the N-terminal section; belongs to the bacterial solute-binding protein 3 family. It in the C-terminal section; belongs to the transglycosylase Slt family.

The protein resides in the cell outer membrane. It carries out the reaction Exolytic cleavage of the (1-&gt;4)-beta-glycosidic linkage between N-acetylmuramic acid (MurNAc) and N-acetylglucosamine (GlcNAc) residues in peptidoglycan, from either the reducing or the non-reducing ends of the peptidoglycan chains, with concomitant formation of a 1,6-anhydrobond in the MurNAc residue.. Murein-degrading enzyme that degrades murein glycan strands and insoluble, high-molecular weight murein sacculi, with the concomitant formation of a 1,6-anhydromuramoyl product. Lytic transglycosylases (LTs) play an integral role in the metabolism of the peptidoglycan (PG) sacculus. Their lytic action creates space within the PG sacculus to allow for its expansion as well as for the insertion of various structures such as secretion systems and flagella. This chain is Membrane-bound lytic murein transglycosylase F, found in Shewanella denitrificans (strain OS217 / ATCC BAA-1090 / DSM 15013).